The chain runs to 64 residues: Small ribosomal subunit protein eS17 (64 aa).

The protein belongs to the eukaryotic ribosomal protein eS17 family.

The chain is Small ribosomal subunit protein eS17 from Methanospirillum hungatei JF-1 (strain ATCC 27890 / DSM 864 / NBRC 100397 / JF-1).